The primary structure comprises 164 residues: MEMTNAQRLILSNQYKMMTMLDPDNAERYRRLQTIVERGFGLQMRELDREFGELKEETCRTVIDIMEMYHALHVSWTNLKDAQTIDERRVTFLGFDVATESRYLSYVRFMVNTEGRYTHFDAGTHGFNSQTPMWEKYQRMLSVWHSCPRQYHLSSNEIQQIINA.

It belongs to the UPF0304 family.

In Enterobacter sp. (strain 638), this protein is UPF0304 protein Ent638_2838.